Reading from the N-terminus, the 347-residue chain is MSDQRDLSWKPPDAPSRIGITLETYILEGMLGFPAATGAFTSLLNQLGLVAKLVTSKVRRAGLANVLGYTGQTNVQGEVVQKLDEVANETLLSVLGRRGHCAAVVSEELGEMRLLSTDPRAKYIVVVDPLDGSSNIDVNISIGTIFGVLRKSDAKMGADPSDFLRPGRDLVAAGYVLYGSSTLLVITTGLGGVHGFTYDPTVGEFFLSHENIRIPERGSTYSINEGHSARWPEDVRRWNAWIKEDSKPEGRPYGARYVGSLVADAHRTLLKGGIFAYPADRSGQGKLRLLYEASPFAFIFEAAGGKASTGAERILDRVPRSLHERVPLVLGSPRDVEDFEQFVRGER.

Residues E107, D128, L130, and D131 each coordinate Mg(2+). Substrate is bound by residues 131-134 (DGSS), N224, Y257, and K286. Residue E292 participates in Mg(2+) binding.

This sequence belongs to the FBPase class 1 family. Homotetramer. Mg(2+) is required as a cofactor.

The protein resides in the cytoplasm. The catalysed reaction is beta-D-fructose 1,6-bisphosphate + H2O = beta-D-fructose 6-phosphate + phosphate. The protein operates within carbohydrate biosynthesis; gluconeogenesis. The protein is Fructose-1,6-bisphosphatase class 1 of Sorangium cellulosum (strain So ce56) (Polyangium cellulosum (strain So ce56)).